The chain runs to 283 residues: Putative ABC transporter ATP-binding protein MA_4342 (283 aa).

The ABC transporter domain occupies 3-238; that stretch reads IILENVSFFY…KNVPLPPVTS (236 aa). 40 to 47 provides a ligand contact to ATP; the sequence is GEKGAGKS.

The protein belongs to the ABC transporter superfamily.

The protein localises to the cell membrane. Probably part of an ABC transporter complex. Responsible for energy coupling to the transport system. In Methanosarcina acetivorans (strain ATCC 35395 / DSM 2834 / JCM 12185 / C2A), this protein is Putative ABC transporter ATP-binding protein MA_4342.